A 410-amino-acid chain; its full sequence is Bifunctional malic/malolactic enzyme (410 aa).

The Proton donor role is filled by Tyr-36. The active-site Proton acceptor is the Lys-91. Residues Glu-133, Asp-134, and Asp-159 each coordinate a divalent metal cation. Residues 192–195, Asn-286, and Asn-317 contribute to the NADP(+) site; that span reads AGAA.

It belongs to the malic enzymes family. As to quaternary structure, interacts with BrxC. Mg(2+) serves as cofactor. It depends on Mn(2+) as a cofactor.

The enzyme catalyses (S)-malate + NADP(+) = pyruvate + CO2 + NADPH. It catalyses the reaction oxaloacetate + H(+) = pyruvate + CO2. The catalysed reaction is (S)-malate + H(+) = (S)-lactate + CO2. With respect to regulation, NADPH is a strong modulator that switches activity from a pyruvate-producing malic enzyme to a lactate-generating malolactic enzyme. In terms of biological role, bifunctional enzyme with both malic and malolactic enzyme activities. In the absence of NADPH, catalyzes the reversible decarboxylation of malate to pyruvate. Can use NAD and NADP, but with a very strong preference for NADP. In the presence of excess NADPH, catalyzes the non-oxidative decarboxylation of malate to lactate. During growth on glucose, contributes to NADPH balancing via oxidation of the NADPH produced in excess by other enzymatic reactions. Can also catalyze the decarboxylation of oxaloacetate. The sequence is that of Bifunctional malic/malolactic enzyme (ytsJ) from Bacillus subtilis (strain 168).